Reading from the N-terminus, the 253-residue chain is Coenzyme F420:L-glutamate ligase (253 aa).

Residues 9-12, 38-39, and K43 each bind GTP; these read LPEI and ST. D113 contributes to the a divalent metal cation binding site. N116 is a GTP binding site. D148, T149, and E206 together coordinate a divalent metal cation. Residue 204–211 participates in GTP binding; the sequence is AGEGDDGT.

The protein belongs to the CofE family. In terms of assembly, homodimer. Mg(2+) serves as cofactor. The cofactor is Mn(2+). It depends on K(+) as a cofactor.

It carries out the reaction oxidized coenzyme F420-0 + GTP + L-glutamate = oxidized coenzyme F420-1 + GDP + phosphate + H(+). The catalysed reaction is oxidized coenzyme F420-1 + GTP + L-glutamate = oxidized coenzyme F420-2 + GDP + phosphate + H(+). Its pathway is cofactor biosynthesis; coenzyme F420 biosynthesis. Functionally, catalyzes the GTP-dependent successive addition of two or more gamma-linked L-glutamates to the L-lactyl phosphodiester of 7,8-didemethyl-8-hydroxy-5-deazariboflavin (F420-0) to form coenzyme F420-0-glutamyl-glutamate (F420-2) or polyglutamated F420 derivatives. The chain is Coenzyme F420:L-glutamate ligase from Natronomonas pharaonis (strain ATCC 35678 / DSM 2160 / CIP 103997 / JCM 8858 / NBRC 14720 / NCIMB 2260 / Gabara) (Halobacterium pharaonis).